Consider the following 145-residue polypeptide: MKVILIKDTKDGKANTIIDVSPGYATNFLFKNKLAEPLNSRTEKLLVKRKQQIEIEKQEKQEQIAKLKIEIERLVLWFKLKGNKESVHGAITAKKIKKELEIKGIFVDKQAIQTSGISTFGTSFVDIKLSSQTIAKLKINITKDE.

This sequence belongs to the bacterial ribosomal protein bL9 family.

In terms of biological role, binds to the 23S rRNA. The chain is Large ribosomal subunit protein bL9 from Mesomycoplasma hyopneumoniae (strain 232) (Mycoplasma hyopneumoniae).